Consider the following 358-residue polypeptide: UDP-N-acetylglucosamine--N-acetylmuramyl-(pentapeptide) pyrophosphoryl-undecaprenol N-acetylglucosamine transferase (358 aa).

UDP-N-acetyl-alpha-D-glucosamine-binding positions include 13-15 (TAG), Arg-166, Ser-196, and Gln-291.

This sequence belongs to the glycosyltransferase 28 family. MurG subfamily.

The protein localises to the cell membrane. It catalyses the reaction di-trans,octa-cis-undecaprenyl diphospho-N-acetyl-alpha-D-muramoyl-L-alanyl-D-glutamyl-meso-2,6-diaminopimeloyl-D-alanyl-D-alanine + UDP-N-acetyl-alpha-D-glucosamine = di-trans,octa-cis-undecaprenyl diphospho-[N-acetyl-alpha-D-glucosaminyl-(1-&gt;4)]-N-acetyl-alpha-D-muramoyl-L-alanyl-D-glutamyl-meso-2,6-diaminopimeloyl-D-alanyl-D-alanine + UDP + H(+). It functions in the pathway cell wall biogenesis; peptidoglycan biosynthesis. Functionally, cell wall formation. Catalyzes the transfer of a GlcNAc subunit on undecaprenyl-pyrophosphoryl-MurNAc-pentapeptide (lipid intermediate I) to form undecaprenyl-pyrophosphoryl-MurNAc-(pentapeptide)GlcNAc (lipid intermediate II). This is UDP-N-acetylglucosamine--N-acetylmuramyl-(pentapeptide) pyrophosphoryl-undecaprenol N-acetylglucosamine transferase from Clostridium botulinum (strain Alaska E43 / Type E3).